A 156-amino-acid polypeptide reads, in one-letter code: Endoribonuclease YbeY (156 aa).

The Zn(2+) site is built by His117, His121, and His127.

It belongs to the endoribonuclease YbeY family. Requires Zn(2+) as cofactor.

It is found in the cytoplasm. Its function is as follows. Single strand-specific metallo-endoribonuclease involved in late-stage 70S ribosome quality control and in maturation of the 3' terminus of the 16S rRNA. This Shewanella frigidimarina (strain NCIMB 400) protein is Endoribonuclease YbeY.